Consider the following 206-residue polypeptide: MPRPASHLAPMPSDHPDFRSKSARLRCQPPRTNNCGTFKQPPSVAATSRPKPGNPFLQPPTKGTPPPKKKKKNHTEGCHTHEANPEPNTKHTETESPKPQTSTQHHTPITIPSSLLSQNTQREKRGLPLLTSRPSTIPANTYQPQSPHIHSHTPLQRPISTALLHQNLHIRARNIRHTGRLHGSPTKGAQTAQQAQPHPPKQLATL.

Disordered stretches follow at residues 1-153 (MPRP…HSHT) and 179-206 (GRLH…LATL). The segment covering 74–96 (HTEGCHTHEANPEPNTKHTETES) has biased composition (basic and acidic residues). Composition is skewed to polar residues over residues 97–120 (PKPQ…SQNT) and 132–148 (SRPS…QSPH).

Belongs to the UPF0328 family.

The polypeptide is UPF0328 protein ECU01_0050/ECU01_1560 (Encephalitozoon cuniculi (strain GB-M1) (Microsporidian parasite)).